A 1705-amino-acid polypeptide reads, in one-letter code: MAAANAPIIMKEVLTLPSVGIGQQFITFTNVTMESDKYICVRETAPQNSVVIIDMNMPMQPLRRPITADSALMNPNSRILALKAQVPGTTQDHLQIFNIEAKAKLKSHQMPEQVAFWKWITPKMLGLVTQTSVYHWSIEGDSEPVKMFDRTANLANNQIINYKCSPNEKWLVLIGIAPGSPERPQLVKGNMQLFSVDQQRSQALEAHAASFAQFKVPGNENPSILISFASKSFNAGQITSKLHVIELGAQPGKPSFTKKQADLFFPPDFADDFPVAMQVSHKFNLIYVITKLGLLFVYDLETASAIYRNRISPDPIFLTSEASSVGGFYAINRRGQVLLATVNEATIIPFISGQLNNLELAVNLAKRGNLPGAENLVVQRFQELFAQTKYKEAAELAAESPQGILRTPDTVAKFQSVPVQAGQTPPLLQYFGTLLTRGKLNSYESLELSRLVVNQNKKNLLENWLAEDKLECSEELGDLVKTVDNDLALKIYIKARATPKVVAAFAERREFDKILIYSKQVGYTPDYMFLLQTILRTDPQGAVNFALMMSQMEGGCPVDYNTITDLFLQRNLIREATAFLLDVLKPNLPEHAFLQTKVLEINLVTFPNVADAILANGMFSHYDRPRVAQLCEKAGLYIQSLKHYSELPDIKRVIVNTHAIEPQALVEFFGTLSSEWAMECMKDLLLVNLRGNLQIIVQACKEYCEQLGVDACIKLFEQFKSYEGLYFFLGSYLSMSEDPEIHFKYIEAAAKTGQIKEVERVTRESNFYDAEKTKNFLMEAKLPDARPLINVCDRFGFVPDLTHYLYTNNMLRYIEGYVQKVNPGNAPLVVGQLLDDECPEDFIKGLILSVRSLLPVEPLVAECEKRNRLRLLTQFLEHLVSEGSQDVHVHNALGKIIIDSNNNPEHFLTTNPYYDSKVVGKYCEKRDPTLAVVAYRRGQCDEELINVTNKNSLFKLQARYVVERMDGDLWEKVLTEENEYRRQLIDQVVSTALPESKSPEQVSAAVKAFMTADLPHELIELLEKIVLQNSAFSGNFNLQNLLILTAIKADPSRVMDYINRLDNFDGPAVGEVAVDAQLYEEAFAIFKKFNLNVQAVNVLLDNVRSIERAVEFAFRVEEDAVWSQVAKAQLREGLVSDAIESFIRADDTTQFLEVIRASEDTNVYDDLVRYLLMVRQKVKEPKVDSELIYAYAKIERLGEIEEFILMPNVANLQHVGDRLYDEALYEAAKIIYAFISNWAKLAVTLVKLQQFQGAVDAARKANSAKTWKEVCFACVDAEEFRLAQICGLNIIIQVDDLEEVSEYYQNRGCFNELISLMESGLGLERAHMGIFTELGVLYARYRYEKLMEHIKLFSTRLNIPKLIRACDEQQHWQELTYLYIQYDEFDNAATTVMNHSPEAWEHMQFKDIVAKVANVELYYKAVHFYLQEHPDIINDLLNVLALRLDHTRVVDIMRKAGHLRLIKPYMVAVQSNNVSAVNEALNEIYAEEEDYDRLRESIDLHDSFDQIGLAQKIEKHELVEMRRVAAYIYKKAGRWKQSIALSKKDNMYKDCMETASQSGDHDLAEQLLVYFIEQGKKECFATCLFVCYDLIRPDVALELAWINNMIDFAFPYLLQFIREYSGKVDELIKDKLEAQKEVKAKEQEEKDVMSQQNMYAQLLPLALPAPPMPGMGGGGYGPPPQMGGMPGMSGMPPMPPYGMPPMGGY.

Residue Ala2 is modified to N-acetylalanine. The interval 2–492 is globular terminal domain; the sequence is AAANAPIIMK…VDNDLALKIY (491 aa). 7 WD40-like repeat regions span residues 25–67, 68–113, 114–155, 156–205, 206–270, 271–314, and 315–343; these read FITF…RPIT, ADSA…MPEQ, VAFW…ANLA, NNQI…QALE, AHAA…PDFA, DDFP…ISPD, and PIFL…ATVN. The segment at 462 to 478 is binding site for the uncoating ATPase, involved in lattice disassembly; sequence ENWLAEDKLECSEELGD. A flexible linker region spans residues 493–536; sequence IKARATPKVVAAFAERREFDKILIYSKQVGYTPDYMFLLQTILR. The interval 537-648 is distal segment; that stretch reads TDPQGAVNFA…QSLKHYSELP (112 aa). The segment at 537 to 1705 is heavy chain arm; that stretch reads TDPQGAVNFA…PYGMPPMGGY (1169 aa). CHCR repeat units lie at residues 551-697, 700-842, 847-986, 993-1138, 1142-1283, 1288-1434, and 1437-1580; these read QMEG…QIIV, CKEY…PEDF, ILSV…QLID, LPES…VSDA, FIRA…FRLA, LNII…DIIN, and LNVL…KECF. A proximal segment region spans residues 653–1705; it reads VIVNTHAIEP…PYGMPPMGGY (1053 aa). The interval 1227-1536 is involved in binding clathrin light chain; that stretch reads AAKIIYAFIS…YIYKKAGRWK (310 aa). Positions 1564 to 1705 are trimerization; the sequence is AEQLLVYFIE…PYGMPPMGGY (142 aa).

The protein belongs to the clathrin heavy chain family. As to quaternary structure, clathrin triskelions, composed of 3 heavy chains and 3 light chains, are the basic subunits of the clathrin coat. Interacts with SCYL2B.

The protein localises to the cytoplasmic vesicle membrane. It localises to the membrane. The protein resides in the coated pit. In terms of biological role, clathrin is the major protein of the polyhedral coat of coated pits and vesicles. Mediates endocytosis and is required for a correct polar distribution of PIN auxin transporters. The polypeptide is Clathrin heavy chain 1 (Arabidopsis thaliana (Mouse-ear cress)).